Consider the following 483-residue polypeptide: tRNA (guanine(37)-N(1))-methyltransferase (483 aa).

The tract at residues 1 to 24 is disordered; it reads MEEAATLQSLSISSSSPFPNNSSP. Low complexity predominate over residues 9–24; the sequence is SLSISSSSPFPNNSSP. Residues histidine 252, 290–291, and asparagine 379 contribute to the S-adenosyl-L-methionine site; that span reads DL.

It belongs to the class I-like SAM-binding methyltransferase superfamily. TRM5/TYW2 family. As to quaternary structure, monomer.

Its subcellular location is the mitochondrion matrix. It localises to the nucleus. The protein localises to the cytoplasm. It carries out the reaction guanosine(37) in tRNA + S-adenosyl-L-methionine = N(1)-methylguanosine(37) in tRNA + S-adenosyl-L-homocysteine + H(+). Functionally, specifically methylates the N1 position of guanosine-37 in various cytoplasmic and mitochondrial tRNAs. Methylation is not dependent on the nature of the nucleoside 5' of the target nucleoside. This is the first step in the biosynthesis of wybutosine (yW), a modified base adjacent to the anticodon of tRNAs and required for accurate decoding. The chain is tRNA (guanine(37)-N(1))-methyltransferase from Ajellomyces capsulatus (strain G186AR / H82 / ATCC MYA-2454 / RMSCC 2432) (Darling's disease fungus).